Here is a 362-residue protein sequence, read N- to C-terminus: 3-dehydroquinate synthase (362 aa).

NAD(+)-binding positions include 71-76 (DGEQYK), 105-109 (GVIGD), 129-130 (TT), Lys142, Lys151, and 169-172 (CLKT). Zn(2+) contacts are provided by Glu184, His247, and His264.

This sequence belongs to the sugar phosphate cyclases superfamily. Dehydroquinate synthase family. It depends on NAD(+) as a cofactor. Requires Co(2+) as cofactor. The cofactor is Zn(2+).

The protein resides in the cytoplasm. The catalysed reaction is 7-phospho-2-dehydro-3-deoxy-D-arabino-heptonate = 3-dehydroquinate + phosphate. It functions in the pathway metabolic intermediate biosynthesis; chorismate biosynthesis; chorismate from D-erythrose 4-phosphate and phosphoenolpyruvate: step 2/7. Catalyzes the conversion of 3-deoxy-D-arabino-heptulosonate 7-phosphate (DAHP) to dehydroquinate (DHQ). This chain is 3-dehydroquinate synthase, found in Salmonella typhi.